Reading from the N-terminus, the 497-residue chain is Angiopoietin-1 (497 aa).

The signal sequence occupies residues Met-1–Thr-15. N-linked (GlcNAc...) asparagine glycosylation is found at Asn-92, Asn-122, Asn-154, Asn-243, and Asn-294. A coiled-coil region spans residues Leu-153–Leu-261. Residues Lys-276 to Asp-496 form the Fibrinogen C-terminal domain. 2 disulfide bridges follow: Cys-285–Cys-314 and Cys-438–Cys-451.

In terms of assembly, homooligomer. Interacts with TEK/TIE2. Interacts with SVEP1/polydom. Interacts with THBD; this interaction significantly inhibits the generation of activated PC and TAFIa/CPB2 by the thrombin/thrombomodulin complex.

Its subcellular location is the secreted. Its function is as follows. Binds and activates TIE2 receptor by inducing its tyrosine phosphorylation. Implicated in endothelial developmental processes later and distinct from that of VEGF. Appears to play a crucial role in mediating reciprocal interactions between the endothelium and surrounding matrix and mesenchyme. Mediates blood vessel maturation/stability. It may play an important role in the heart early development. The sequence is that of Angiopoietin-1 (ANGPT1) from Bos taurus (Bovine).